Consider the following 747-residue polypeptide: MTDSWERGKGRRTQPPWSAPNTQAQPGLRLYNSLTRSKELFVPQDGNKVTWYCCGPTVYDASHMGHARSYISFDILRRVLRDYFKYDVFYCMNITDIDDKIIKRARQRHLFQQYRERNPRPSDLLQDVSAALTPFLQRISEANDPDKRQMLERIHGSVSAALLPLQDAVSSNARAEELERLSQELMEAAVDLLSDWLDEKHGAQITDNSIFSQLPKHWESEYHRDMEALNVLPPDVLTRVSEYVPEIVAFVQRIVDNGYGYVSNGSVYFSTAKFHASEKHYYAKLVPEAVGDQKALQEGEGDLSISADRLSEKQSPNDFALWKASKPGEPSWESPWGKGRPGWHIECSAMAGSILGESMDIHGGGFDLRFPHHDNELAQSEAYFDNDHWVRYFLHTGHLTIAGCKMSKSLKNFITIKDALQKNTARQLRLAFLMHAWKDTLDYSSNTMESAVQYEKFMNEFFLNVKDLLRAPTDVTGQFVKWEVPELELNSCFYSKKAAVHEALCDNIDTRTVMEEMRSLVSQCNSYIASRKAAKQPPNRLLLRSVSSYLTAMLKVFGAIEGEEVIGFPIGGSDNSMNLESTVMPYLQVLSQFREGVRQIARQHKVTEVLQLSDLLRDDVLPELGVRLEDHEGLPTVVKLVDRETLLKEKEEKRKAEEEKQRKKEEAARKKQQQEAAKLEKMKVSPSQMFQLETDKYSQFDESGFPTHDTEGKELSKGQSKKLRKLYEAQEKLHKEYLQMAQNGTTG.

The segment at 1–25 (MTDSWERGKGRRTQPPWSAPNTQAQ) is disordered. Over residues 15–25 (PPWSAPNTQAQ) the composition is skewed to polar residues. C54 serves as a coordination point for Zn(2+). Position 55 (G55) interacts with L-cysteine. A 'HIGH' region motif is present at residues 56–66 (PTVYDASHMGH). T95 contacts L-cysteine. A 'KIIK' region motif is present at residues 100-103 (KIIK). Zn(2+) is bound by residues C347, H372, and E376. Residue H372 coordinates L-cysteine. The 'KMSKS' region motif lies at 405–409 (KMSKS). K408 lines the ATP pocket. The span at 651–683 (EEKRKAEEEKQRKKEEAARKKQQQEAAKLEKMK) shows a compositional bias: basic and acidic residues. A disordered region spans residues 651 to 722 (EEKRKAEEEK…KELSKGQSKK (72 aa)).

This sequence belongs to the class-I aminoacyl-tRNA synthetase family. In terms of assembly, homodimer. It depends on Zn(2+) as a cofactor.

Its subcellular location is the cytoplasm. The enzyme catalyses tRNA(Cys) + L-cysteine + ATP = L-cysteinyl-tRNA(Cys) + AMP + diphosphate. Functionally, catalyzes the ATP-dependent ligation of cysteine to tRNA(Cys). In Xenopus tropicalis (Western clawed frog), this protein is Cysteine--tRNA ligase, cytoplasmic (cars1).